The chain runs to 1045 residues: Putative sodium-coupled neutral amino acid transporter 10 (1045 aa).

10 consecutive transmembrane segments (helical) span residues 8–28 (LIMNIVNSIVGVSVLTMPFCF), 33–53 (ILLGTLLLMLCTWMAHHSCMF), 85–105 (SMIGLMLGTCIAFYVVIGDLG), 117–137 (VSEGFRVFLLFSVSLCIVLPL), 150–170 (FSAMALMFYTVFMFVIVLSSF), 226–246 (IFALSLNVVTTFYITVGFFGY), 269–289 (MIRVGFMMSVAVGFPMMILPC), 320–340 (ILTLVVVFGTMLGGILIPNVE), 342–362 (ILGLTGATMGSLICLICPALI), and 375–395 (FILGVGLLILVISTYTTLTVT). Composition is skewed to basic and acidic residues over residues 412-453 (KEEK…EEQI), 460-479 (PQKEKDTKKQEEVQLDRPDQ), and 503-546 (VDEK…DQAE). Disordered stretches follow at residues 412–584 (KEEK…EQPP) and 606–658 (EIAE…AEAG). Over residues 564 to 573 (NDPNKQQLVN) the composition is skewed to polar residues. The segment covering 627–658 (PIKDEKNEQIPGDPGKESHVEPKAEDNQAEAG) has biased composition (basic and acidic residues).

This sequence belongs to the amino acid/polyamine transporter 2 family.

The protein resides in the membrane. Its function is as follows. Putative sodium-dependent amino acid/proton antiporter. The chain is Putative sodium-coupled neutral amino acid transporter 10 (slc38a10) from Xenopus laevis (African clawed frog).